The chain runs to 210 residues: Adenylate kinase (210 aa).

An ATP-binding site is contributed by 10 to 15; the sequence is GSGKGT. An NMP region spans residues 30 to 54; that stretch reads SCGDILRKQNKCCDINKLIKKGELI. Residues R36, 52–54, 80–83, and Q87 each bind AMP; these read ELI and GFPR. The LID stretch occupies residues 117–154; it reads GRIIDKVSGEIYHLKFNPPKFITEKSNKNKILVRRLDD. Residues R118 and 127-128 contribute to the ATP site; that span reads IY. AMP is bound by residues R151 and R162. F195 serves as a coordination point for ATP.

It belongs to the adenylate kinase family. Monomer.

The protein localises to the cytoplasm. It carries out the reaction AMP + ATP = 2 ADP. It functions in the pathway purine metabolism; AMP biosynthesis via salvage pathway; AMP from ADP: step 1/1. In terms of biological role, catalyzes the reversible transfer of the terminal phosphate group between ATP and AMP. Plays an important role in cellular energy homeostasis and in adenine nucleotide metabolism. This chain is Adenylate kinase, found in Wigglesworthia glossinidia brevipalpis.